The sequence spans 203 residues: Transcriptional regulator GfcR 2 (203 aa).

This sequence belongs to the purine/pyrimidine phosphoribosyltransferase family. GfcR subfamily.

The protein is Transcriptional regulator GfcR 2 of Methanosarcina acetivorans (strain ATCC 35395 / DSM 2834 / JCM 12185 / C2A).